The primary structure comprises 357 residues: uncharacterized protein (357 aa).

The disordered stretch occupies residues 120–145 (SSSTVNHDQPAEQPSDKSTDDSTGYP).

This is an uncharacterized protein from Caenorhabditis elegans.